Consider the following 536-residue polypeptide: Light-independent protochlorophyllide reductase subunit B (536 aa).

Residue D36 coordinates [4Fe-4S] cluster. D292 serves as the catalytic Proton donor. 427–428 (GL) contributes to the substrate binding site. The segment covering 448-469 (SHLGHLGGHQSQTEQQQSQAAT) has biased composition (low complexity). Positions 448 to 489 (SHLGHLGGHQSQTEQQQSQAATNPSTQSNADSSSEESPLWTP) are disordered. Over residues 470-483 (NPSTQSNADSSSEE) the composition is skewed to polar residues.

The protein belongs to the ChlB/BchB/BchZ family. As to quaternary structure, protochlorophyllide reductase is composed of three subunits; ChlL, ChlN and ChlB. Forms a heterotetramer of two ChlB and two ChlN subunits. Requires [4Fe-4S] cluster as cofactor.

The catalysed reaction is chlorophyllide a + oxidized 2[4Fe-4S]-[ferredoxin] + 2 ADP + 2 phosphate = protochlorophyllide a + reduced 2[4Fe-4S]-[ferredoxin] + 2 ATP + 2 H2O. Its pathway is porphyrin-containing compound metabolism; chlorophyll biosynthesis (light-independent). In terms of biological role, component of the dark-operative protochlorophyllide reductase (DPOR) that uses Mg-ATP and reduced ferredoxin to reduce ring D of protochlorophyllide (Pchlide) to form chlorophyllide a (Chlide). This reaction is light-independent. The NB-protein (ChlN-ChlB) is the catalytic component of the complex. The chain is Light-independent protochlorophyllide reductase subunit B from Prochlorococcus marinus (strain MIT 9313).